Here is a 336-residue protein sequence, read N- to C-terminus: N-lysine methyltransferase KMT5A-B (336 aa).

Disordered regions lie at residues 1–107 (MGRG…SSKQ) and 141–165 (QSQK…NRKL). Over residues 67-93 (SVAHHESKNLGKPTTETRKKAEVEKKR) the composition is skewed to basic and acidic residues. The span at 95-104 (SSATELSVKS) shows a compositional bias: polar residues. Residues 146–162 (VKNKSQRRKAQRKKSPN) are compositionally biased toward basic residues. The SET domain occupies 200-321 (DGMKMDMIIG…VGEELLYDYG (122 aa)). S-adenosyl-L-methionine contacts are provided by residues 210–212 (KGR), tyrosine 255, and 282–283 (NH).

This sequence belongs to the class V-like SAM-binding methyltransferase superfamily. Histone-lysine methyltransferase family. PR/SET subfamily. Post-translationally, phosphorylated during mitosis.

The protein resides in the nucleus. Its subcellular location is the chromosome. The enzyme catalyses L-lysyl(20)-[histone H4] + S-adenosyl-L-methionine = N(6)-methyl-L-lysyl(20)-[histone H4] + S-adenosyl-L-homocysteine + H(+). The catalysed reaction is L-lysyl-[protein] + S-adenosyl-L-methionine = N(6)-methyl-L-lysyl-[protein] + S-adenosyl-L-homocysteine + H(+). Functionally, protein-lysine N-methyltransferase that monomethylates both histones and non-histone proteins. Specifically monomethylates 'Lys-20' of histone H4 (H4K20me1). H4K20me1 is enriched during mitosis and represents a specific tag for epigenetic transcriptional repression. Mainly functions in euchromatin regions, thereby playing a central role in the silencing of euchromatic genes. Required for cell proliferation, probably by contributing to the maintenance of proper higher-order structure of DNA during mitosis. Involved in chromosome condensation and proper cytokinesis. The polypeptide is N-lysine methyltransferase KMT5A-B (Xenopus laevis (African clawed frog)).